The following is a 398-amino-acid chain: Dual-specificity RNA methyltransferase RlmN (398 aa).

Glutamate 100 functions as the Proton acceptor in the catalytic mechanism. The region spanning aspartate 106–aspartate 345 is the Radical SAM core domain. Cysteine 113 and cysteine 350 form a disulfide bridge. [4Fe-4S] cluster is bound by residues cysteine 120, cysteine 124, and cysteine 127. S-adenosyl-L-methionine is bound by residues glycine 174–glutamate 175, serine 206, serine 228–histidine 230, and asparagine 307. Catalysis depends on cysteine 350, which acts as the S-methylcysteine intermediate.

This sequence belongs to the radical SAM superfamily. RlmN family. The cofactor is [4Fe-4S] cluster.

It is found in the cytoplasm. The catalysed reaction is adenosine(2503) in 23S rRNA + 2 reduced [2Fe-2S]-[ferredoxin] + 2 S-adenosyl-L-methionine = 2-methyladenosine(2503) in 23S rRNA + 5'-deoxyadenosine + L-methionine + 2 oxidized [2Fe-2S]-[ferredoxin] + S-adenosyl-L-homocysteine. It carries out the reaction adenosine(37) in tRNA + 2 reduced [2Fe-2S]-[ferredoxin] + 2 S-adenosyl-L-methionine = 2-methyladenosine(37) in tRNA + 5'-deoxyadenosine + L-methionine + 2 oxidized [2Fe-2S]-[ferredoxin] + S-adenosyl-L-homocysteine. Its function is as follows. Specifically methylates position 2 of adenine 2503 in 23S rRNA and position 2 of adenine 37 in tRNAs. m2A2503 modification seems to play a crucial role in the proofreading step occurring at the peptidyl transferase center and thus would serve to optimize ribosomal fidelity. This is Dual-specificity RNA methyltransferase RlmN from Saccharophagus degradans (strain 2-40 / ATCC 43961 / DSM 17024).